The chain runs to 898 residues: Alanine--tRNA ligase (898 aa).

The Zn(2+) site is built by histidine 564, histidine 568, cysteine 682, and histidine 686.

Belongs to the class-II aminoacyl-tRNA synthetase family. It depends on Zn(2+) as a cofactor.

It is found in the cytoplasm. It carries out the reaction tRNA(Ala) + L-alanine + ATP = L-alanyl-tRNA(Ala) + AMP + diphosphate. Functionally, catalyzes the attachment of alanine to tRNA(Ala) in a two-step reaction: alanine is first activated by ATP to form Ala-AMP and then transferred to the acceptor end of tRNA(Ala). Also edits incorrectly charged Ser-tRNA(Ala) and Gly-tRNA(Ala) via its editing domain. The polypeptide is Alanine--tRNA ligase (Beijerinckia indica subsp. indica (strain ATCC 9039 / DSM 1715 / NCIMB 8712)).